Here is a 141-residue protein sequence, read N- to C-terminus: Large ribosomal subunit protein uL11 (141 aa).

Belongs to the universal ribosomal protein uL11 family. As to quaternary structure, part of the ribosomal stalk of the 50S ribosomal subunit. Interacts with L10 and the large rRNA to form the base of the stalk. L10 forms an elongated spine to which L12 dimers bind in a sequential fashion forming a multimeric L10(L12)X complex. In terms of processing, one or more lysine residues are methylated.

In terms of biological role, forms part of the ribosomal stalk which helps the ribosome interact with GTP-bound translation factors. This chain is Large ribosomal subunit protein uL11, found in Thermosipho africanus (strain TCF52B).